The primary structure comprises 202 residues: Putative NADH dehydrogenase/NAD(P)H nitroreductase SCO7141 (202 aa).

It belongs to the nitroreductase family. HadB/RutE subfamily. It depends on FMN as a cofactor.

The chain is Putative NADH dehydrogenase/NAD(P)H nitroreductase SCO7141 from Streptomyces coelicolor (strain ATCC BAA-471 / A3(2) / M145).